Here is a 662-residue protein sequence, read N- to C-terminus: Protein Aster-C (662 aa).

The disordered stretch occupies residues 1 to 34; it reads MEGAPTVRQVMNEGDSSLATDLQEDVEENPSPTV. The GRAM domain occupies 69 to 136; sequence EEYRRQFTHL…KNITFMTKEK (68 aa). Disordered stretches follow at residues 212–237 and 249–284; these read SIEDVQPRSPGRSSLDDSGERDEKLS and RVSETESFDGNSSKGGLGKEESQNEKQTKKSLLPTL. Residues 265–276 show a composition bias toward basic and acidic residues; sequence LGKEESQNEKQT. The VASt domain occupies 326–497; it reads HGRLFINRIF…DLLIEESVLN (172 aa). Residues 557 to 577 traverse the membrane as a helical segment; sequence LIVVMSIFVLLLVLLNVTLFL.

The protein localises to the endoplasmic reticulum membrane. Its subcellular location is the cell membrane. Cholesterol transporter that mediates non-vesicular transport of cholesterol from the plasma membrane (PM) to the endoplasmic reticulum (ER). Contains unique domains for binding cholesterol and the PM, thereby serving as a molecular bridge for the transfer of cholesterol from the PM to the ER. Plays a crucial role in cholesterol homeostasis and has the unique ability to localize to the PM based on the level of membrane cholesterol. In lipid-poor conditions localizes to the ER membrane and in response to excess cholesterol in the PM is recruited to the endoplasmic reticulum-plasma membrane contact sites (EPCS) which is mediated by the GRAM domain. At the EPCS, the sterol-binding VASt/ASTER domain binds to the cholesterol in the PM and facilitates its transfer from the PM to ER. The sequence is that of Protein Aster-C (GRAMD1C) from Homo sapiens (Human).